The following is a 227-amino-acid chain: MHFSFVTLFPNIIEGYFSDSILKRAIDDGKISIDFYNPRDLTTDKHNRVDAPMIGGGAGMLMTPQPLMDTLSKIKEESPEAHIVFLSPVAKPFIQNDAKRLVKKEHIVFVSGRYEGIDERVIERHADELFSIGDFILTGGELASMVLCDAVARNVEGVLGNSVSLEVESFEASLLEAPSFTKPINYENNEVVSEFLKGNHSKITDLKRGLALCKTKFFRPDLYKKKV.

S-adenosyl-L-methionine-binding positions include Gly-112 and 132 to 137; that span reads IGDFIL.

Belongs to the RNA methyltransferase TrmD family. Homodimer.

The protein resides in the cytoplasm. It catalyses the reaction guanosine(37) in tRNA + S-adenosyl-L-methionine = N(1)-methylguanosine(37) in tRNA + S-adenosyl-L-homocysteine + H(+). Its function is as follows. Specifically methylates guanosine-37 in various tRNAs. The chain is tRNA (guanine-N(1)-)-methyltransferase from Sulfurovum sp. (strain NBC37-1).